The sequence spans 148 residues: Macrodomain Ter protein (148 aa).

Belongs to the MatP family. In terms of assembly, homodimer.

It is found in the cytoplasm. Functionally, required for spatial organization of the terminus region of the chromosome (Ter macrodomain) during the cell cycle. Prevents early segregation of duplicated Ter macrodomains during cell division. Binds specifically to matS, which is a 13 bp signature motif repeated within the Ter macrodomain. This Aliivibrio salmonicida (strain LFI1238) (Vibrio salmonicida (strain LFI1238)) protein is Macrodomain Ter protein.